A 238-amino-acid polypeptide reads, in one-letter code: 1-(5-phosphoribosyl)-5-[(5-phosphoribosylamino)methylideneamino] imidazole-4-carboxamide isomerase (238 aa).

Asp-8 (proton acceptor) is an active-site residue. The active-site Proton donor is Asp-130.

This sequence belongs to the HisA/HisF family.

The protein resides in the cytoplasm. It catalyses the reaction 1-(5-phospho-beta-D-ribosyl)-5-[(5-phospho-beta-D-ribosylamino)methylideneamino]imidazole-4-carboxamide = 5-[(5-phospho-1-deoxy-D-ribulos-1-ylimino)methylamino]-1-(5-phospho-beta-D-ribosyl)imidazole-4-carboxamide. It functions in the pathway amino-acid biosynthesis; L-histidine biosynthesis; L-histidine from 5-phospho-alpha-D-ribose 1-diphosphate: step 4/9. This chain is 1-(5-phosphoribosyl)-5-[(5-phosphoribosylamino)methylideneamino] imidazole-4-carboxamide isomerase, found in Methanococcus maripaludis (strain C7 / ATCC BAA-1331).